The primary structure comprises 71 residues: Small ribosomal subunit protein bS18 (71 aa).

Belongs to the bacterial ribosomal protein bS18 family. In terms of assembly, part of the 30S ribosomal subunit. Forms a tight heterodimer with protein bS6.

In terms of biological role, binds as a heterodimer with protein bS6 to the central domain of the 16S rRNA, where it helps stabilize the platform of the 30S subunit. This Synechococcus elongatus (strain ATCC 33912 / PCC 7942 / FACHB-805) (Anacystis nidulans R2) protein is Small ribosomal subunit protein bS18.